Consider the following 714-residue polypeptide: Polyribonucleotide nucleotidyltransferase (714 aa).

Mg(2+) is bound by residues aspartate 484 and aspartate 490. The KH domain maps to 551–610 (PRIMVINIAPEKVREVIGPGGKVINKIIDETGVKIDTEDDGKITVAGENTESAQRAIDMI). In terms of domain architecture, S1 motif spans 620–688 (GEKYLGRVTK…DQGKMTLSRK (69 aa)). The tract at residues 685-714 (LSRKALLPKPERKEKKNFDKKSEDQNSEDK) is disordered. Over residues 693–714 (KPERKEKKNFDKKSEDQNSEDK) the composition is skewed to basic and acidic residues.

The protein belongs to the polyribonucleotide nucleotidyltransferase family. Mg(2+) serves as cofactor.

The protein resides in the cytoplasm. The enzyme catalyses RNA(n+1) + phosphate = RNA(n) + a ribonucleoside 5'-diphosphate. Functionally, involved in mRNA degradation. Catalyzes the phosphorolysis of single-stranded polyribonucleotides processively in the 3'- to 5'-direction. This is Polyribonucleotide nucleotidyltransferase from Finegoldia magna (strain ATCC 29328 / DSM 20472 / WAL 2508) (Peptostreptococcus magnus).